The primary structure comprises 411 residues: Histone-lysine N-methyltransferase SUV39H1-A (411 aa).

Residues 43-101 (YEVEYLCNYKKHKGREFFLVKWKGYEESENTWEPLKNLKCPILLHQFRKDMKAALLQAN) form the Chromo domain. A Pre-SET domain is found at 178-239 (VGCECEDCVS…DCANRVVQRG (62 aa)). Zn(2+)-binding residues include cysteine 180, cysteine 182, cysteine 185, cysteine 193, cysteine 194, cysteine 221, cysteine 225, cysteine 227, and cysteine 231. Residues 242–365 (YDLCIFKTDN…AGEELTFDYK (124 aa)) form the SET domain. S-adenosyl-L-methionine is bound by residues 253-255 (RGW), tyrosine 296, and 322-323 (NH). The Zn(2+) site is built by cysteine 325, cysteine 399, cysteine 401, and cysteine 406. The 17-residue stretch at 395-411 (VHMECKCGVRNCRKYLF) folds into the Post-SET domain.

This sequence belongs to the class V-like SAM-binding methyltransferase superfamily. Histone-lysine methyltransferase family. Suvar3-9 subfamily. In terms of tissue distribution, expressed ubuitiously.

Its subcellular location is the nucleus. It localises to the chromosome. The protein resides in the centromere. The catalysed reaction is N(6)-methyl-L-lysyl(9)-[histone H3] + S-adenosyl-L-methionine = N(6),N(6)-dimethyl-L-lysyl(9)-[histone H3] + S-adenosyl-L-homocysteine + H(+). It carries out the reaction N(6),N(6)-dimethyl-L-lysyl(9)-[histone H3] + S-adenosyl-L-methionine = N(6),N(6),N(6)-trimethyl-L-lysyl(9)-[histone H3] + S-adenosyl-L-homocysteine + H(+). In terms of biological role, histone methyltransferase that specifically trimethylates 'Lys-9' of histone H3 using monomethylated H3 'Lys-9' as substrate. H3 'Lys-9' trimethylation represents a specific tag for epigenetic transcriptional repression by recruiting HP1 (CBX1, CBX3 and/or CBX5) proteins to methylated histones. Mainly functions in heterochromatin regions, thereby playing a central role in the establishment of constitutive heterochromatin at pericentric and telomere regions. H3 'Lys-9' trimethylation is also required to direct DNA methylation at pericentric repeats. SUV39H1 is targeted to histone H3 via its interaction with RB1 and is involved in many processes, such as regulation of organ-specific terminal differentiation during development. The chain is Histone-lysine N-methyltransferase SUV39H1-A (suv39h1a) from Danio rerio (Zebrafish).